We begin with the raw amino-acid sequence, 513 residues long: Bifunctional purine biosynthesis protein PurH (513 aa).

The MGS-like domain maps to 1–144; it reads MKRALVSVSD…KNYRDVTIVV (144 aa).

Belongs to the PurH family.

The enzyme catalyses (6R)-10-formyltetrahydrofolate + 5-amino-1-(5-phospho-beta-D-ribosyl)imidazole-4-carboxamide = 5-formamido-1-(5-phospho-D-ribosyl)imidazole-4-carboxamide + (6S)-5,6,7,8-tetrahydrofolate. The catalysed reaction is IMP + H2O = 5-formamido-1-(5-phospho-D-ribosyl)imidazole-4-carboxamide. Its pathway is purine metabolism; IMP biosynthesis via de novo pathway; 5-formamido-1-(5-phospho-D-ribosyl)imidazole-4-carboxamide from 5-amino-1-(5-phospho-D-ribosyl)imidazole-4-carboxamide (10-formyl THF route): step 1/1. The protein operates within purine metabolism; IMP biosynthesis via de novo pathway; IMP from 5-formamido-1-(5-phospho-D-ribosyl)imidazole-4-carboxamide: step 1/1. This chain is Bifunctional purine biosynthesis protein PurH, found in Lactobacillus delbrueckii subsp. bulgaricus (strain ATCC BAA-365 / Lb-18).